The primary structure comprises 259 residues: Imidazole glycerol phosphate synthase subunit HisF (259 aa).

Catalysis depends on residues Asp-11 and Asp-130.

The protein belongs to the HisA/HisF family. As to quaternary structure, heterodimer of HisH and HisF.

It is found in the cytoplasm. It carries out the reaction 5-[(5-phospho-1-deoxy-D-ribulos-1-ylimino)methylamino]-1-(5-phospho-beta-D-ribosyl)imidazole-4-carboxamide + L-glutamine = D-erythro-1-(imidazol-4-yl)glycerol 3-phosphate + 5-amino-1-(5-phospho-beta-D-ribosyl)imidazole-4-carboxamide + L-glutamate + H(+). Its pathway is amino-acid biosynthesis; L-histidine biosynthesis; L-histidine from 5-phospho-alpha-D-ribose 1-diphosphate: step 5/9. Its function is as follows. IGPS catalyzes the conversion of PRFAR and glutamine to IGP, AICAR and glutamate. The HisF subunit catalyzes the cyclization activity that produces IGP and AICAR from PRFAR using the ammonia provided by the HisH subunit. The chain is Imidazole glycerol phosphate synthase subunit HisF from Shewanella amazonensis (strain ATCC BAA-1098 / SB2B).